Consider the following 986-residue polypeptide: Resact receptor (986 aa).

A signal peptide spans 1-21; the sequence is MATTRLLFLLVVAVMITMVRS. At 22–507 the chain is on the extracellular side; it reads ATLHYNPTVI…GELCTNWGLY (486 aa). 3 N-linked (GlcNAc...) asparagine glycosylation sites follow: asparagine 185, asparagine 361, and asparagine 410. A helical membrane pass occupies residues 508-528; the sequence is LGTLIPAFIIIFGGGLGYYIY. Topologically, residues 529–986 are cytoplasmic; the sequence is RKRAYEAALD…SHSCSALHSS (458 aa). Positions 568–836 constitute a Protein kinase domain; it reads LSAISVISNA…PNIIEVRTML (269 aa).

Its subcellular location is the membrane. The enzyme catalyses GTP = 3',5'-cyclic GMP + diphosphate. In terms of biological role, implicated as a cell-surface receptor on spermatozoa for 'resact' a chemotactic peptide, and on various other cells as a receptor for atrial natriuretic peptide. The sequence is that of Resact receptor from Arbacia punctulata (Punctuate sea urchin).